Consider the following 667-residue polypeptide: Autophagy-related protein 20 (667 aa).

The disordered stretch occupies residues 1–94 (MKQKKNRFGS…DESFKSTRAN (94 aa)). A compositionally biased stretch (low complexity) spans 38–47 (SSSSRSSSTQ). The span at 55-67 (SLASVHTSDMHQS) shows a compositional bias: polar residues. Residues 76–85 (DDNPFLDQDD) are compositionally biased toward acidic residues. In terms of domain architecture, PX spans 185–331 (KLINDRVQIL…DFLDPNNINW (147 aa)). A 1,2-diacyl-sn-glycero-3-phospho-(1D-myo-inositol-3-phosphate) is bound by residues Arg222, Ser224, Lys248, and Arg297. Residues 524–562 (ELQRGVQPRNGNTASGASGNDESSVKKPQASKSQSSSYG) are disordered. Polar residues predominate over residues 532–545 (RNGNTASGASGNDE). Over residues 549 to 560 (KKPQASKSQSSS) the composition is skewed to low complexity. A coiled-coil region spans residues 588–652 (QTTMANLIKE…SKYLKDYAKK (65 aa)).

This sequence belongs to the sorting nexin family.

It is found in the endosome membrane. The protein localises to the preautophagosomal structure membrane. In terms of biological role, required for cytoplasm to vacuole transport (Cvt), pexophagy and mitophagy. Also involved in endoplasmic reticulum-specific autophagic process and is essential for the survival of cells subjected to severe ER stress. Functions in protein retrieval from the endocytic pathway. The sequence is that of Autophagy-related protein 20 (ATG20) from Vanderwaltozyma polyspora (strain ATCC 22028 / DSM 70294 / BCRC 21397 / CBS 2163 / NBRC 10782 / NRRL Y-8283 / UCD 57-17) (Kluyveromyces polysporus).